We begin with the raw amino-acid sequence, 357 residues long: Arginine kinase (357 aa).

Ala2 is subject to N-acetylalanine. Residues 9 to 91 (KLEEGFKKLE…FDPIIEDYHK (83 aa)) enclose the Phosphagen kinase N-terminal domain. 64–68 (GVGVY) is an L-arginine binding site. The Phosphagen kinase C-terminal domain maps to 119–356 (FVISTRVRCG…LELIKIEKEM (238 aa)). Residues 122–126 (STRVR) and His185 each bind ATP. Glu225 lines the L-arginine pocket. Arg229 is an ATP binding site. Residue Cys271 coordinates L-arginine. ATP is bound by residues 280–284 (RASVH) and 309–314 (RGTRGE). An L-arginine-binding site is contributed by Glu314.

It belongs to the ATP:guanido phosphotransferase family.

It catalyses the reaction L-arginine + ATP = N(omega)-phospho-L-arginine + ADP + H(+). This chain is Arginine kinase, found in Carcinus maenas (Common shore crab).